Consider the following 208-residue polypeptide: Calaxin (208 aa).

EF-hand domains lie at Thr-64 to Gly-99, Thr-100 to Lys-135, and Gly-145 to Leu-180. Residues Asp-77, Asp-79, Asp-81, Asp-113, Asn-115, Asp-117, Tyr-119, Glu-124, Asp-158, Asp-160, Asp-162, Lys-164, and Asp-169 each coordinate Ca(2+).

Component of the outer dynein arm-docking complex along with ODAD1, ODAD2, ODAD3 and ODAD4.

It localises to the cytoplasm. It is found in the cytoskeleton. Its subcellular location is the cilium axoneme. The protein resides in the cell projection. The protein localises to the cilium. It localises to the flagellum. Its function is as follows. Component of the outer dynein arm-docking complex (ODA-DC) that mediates outer dynein arms (ODA) binding onto the doublet microtubule. Seems to regulate the assembly of both ODAs and their axonemal docking complex onto ciliary microtubules. Regulates ciliary and flagellar motility and is required for cilia-driven determination of body laterality. The sequence is that of Calaxin (clxn) from Xenopus laevis (African clawed frog).